The following is a 410-amino-acid chain: Multidrug resistance protein MdtA (410 aa).

The signal sequence occupies residues 1 to 21; it reads MNNRYPVMKKGLIVLVVIAVA. The interval 36 to 56 is disordered; sequence SDGDLSGQSAHGKRGNGAHKP.

It belongs to the membrane fusion protein (MFP) (TC 8.A.1) family. Part of a tripartite efflux system composed of MdtA, MdtB and MdtC.

Its subcellular location is the cell inner membrane. In Pantoea ananatis (strain AJ13355), this protein is Multidrug resistance protein MdtA.